The following is a 142-amino-acid chain: Large ribosomal subunit protein uL13 (142 aa).

Belongs to the universal ribosomal protein uL13 family. In terms of assembly, part of the 50S ribosomal subunit.

Functionally, this protein is one of the early assembly proteins of the 50S ribosomal subunit, although it is not seen to bind rRNA by itself. It is important during the early stages of 50S assembly. The protein is Large ribosomal subunit protein uL13 of Methylococcus capsulatus (strain ATCC 33009 / NCIMB 11132 / Bath).